The primary structure comprises 453 residues: MDQTAIQAADAEAATANRLKYMPGFGNDFETESLPGALPQGQNSPQKCNYGLYAEQLSGSPFTAPRGTNERSWLYRIRPSVRHTRRFSNASYPLWKTAPCLDEHSLPLGQLRWDPIPAPEEKLTFLQGVRTMTTAGDAATQVGMSAHAYVFNEDMVDDYFFDADGELLIVPQLGAIRVFTEMGIMDVEPLEICLVPRGMMFKVMTTGEQTASRGYICENYGAKFTLPDRGPIGANCLANPRDFKTPVAAFEDKEKPCRVHVKWCGKFYVTEIGHSPLDVVAWHGNYAPYKYDLRTFSPVGAISFDHPDPSIFSVLTAPTEDAGTANVDFVIFPPRWLVAEHTFRPPWYHRNIMSEFMGLIHGQYDAKEEGFVPGGISLHNMMLPHGPDALAFEKASNVELKPVKLDHTMAFMFETRYPQQLTKYAAELETLQDDYLECWDGLERKFDGTPGIK.

Residue histidine 306 is the Proton acceptor of the active site. Residues histidine 349 and glutamate 355 each contribute to the Fe cation site. Tyrosine 364 and histidine 385 together coordinate homogentisate. Histidine 385 is a binding site for Fe cation.

It belongs to the homogentisate dioxygenase family. In terms of assembly, hexamer; dimer of trimers. Fe cation is required as a cofactor.

It catalyses the reaction homogentisate + O2 = 4-maleylacetoacetate + H(+). It functions in the pathway amino-acid degradation; L-phenylalanine degradation; acetoacetate and fumarate from L-phenylalanine: step 4/6. In terms of biological role, involved in the catabolism of homogentisate (2,5-dihydroxyphenylacetate or 2,5-OH-PhAc), a central intermediate in the degradation of phenylalanine and tyrosine. Catalyzes the oxidative ring cleavage of the aromatic ring of homogentisate to yield maleylacetoacetate. The chain is Homogentisate 1,2-dioxygenase from Rhizobium etli (strain ATCC 51251 / DSM 11541 / JCM 21823 / NBRC 15573 / CFN 42).